Here is a 218-residue protein sequence, read N- to C-terminus: 2-phospho-L-lactate guanylyltransferase (218 aa).

This sequence belongs to the CofC family. As to quaternary structure, homodimer.

It carries out the reaction (2S)-2-phospholactate + GTP + H(+) = (2S)-lactyl-2-diphospho-5'-guanosine + diphosphate. It functions in the pathway cofactor biosynthesis; coenzyme F420 biosynthesis. Its function is as follows. Guanylyltransferase that catalyzes the activation of (2S)-2-phospholactate (2-PL) as (2S)-lactyl-2-diphospho-5'-guanosine, via the condensation of 2-PL with GTP. It is involved in the biosynthesis of coenzyme F420, a hydride carrier cofactor. The sequence is that of 2-phospho-L-lactate guanylyltransferase from Methanocaldococcus fervens (strain DSM 4213 / JCM 15782 / AG86) (Methanococcus fervens).